A 968-amino-acid chain; its full sequence is RNA polymerase-associated protein RapA (968 aa).

Positions 163–332 (EVGRRYAPRV…FARLRLLDPD (170 aa)) constitute a Helicase ATP-binding domain. 176-183 (DEVGLGKT) lines the ATP pocket. Residues 278 to 281 (DEAH) carry the DEAH box motif. One can recognise a Helicase C-terminal domain in the interval 491 to 641 (RVDWLIEFLK…AFELTCPSGH (151 aa)).

It belongs to the SNF2/RAD54 helicase family. RapA subfamily. Interacts with the RNAP. Has a higher affinity for the core RNAP than for the holoenzyme. Its ATPase activity is stimulated by binding to RNAP.

Transcription regulator that activates transcription by stimulating RNA polymerase (RNAP) recycling in case of stress conditions such as supercoiled DNA or high salt concentrations. Probably acts by releasing the RNAP, when it is trapped or immobilized on tightly supercoiled DNA. Does not activate transcription on linear DNA. Probably not involved in DNA repair. The polypeptide is RNA polymerase-associated protein RapA (Shewanella baltica (strain OS185)).